Here is a 599-residue protein sequence, read N- to C-terminus: Transcription factor COE4 (599 aa).

Positions 64 to 67 (RKSN) are interaction with DNA. The segment at 152–171 (CRVLLTHEIMCSRCCDRKSC) adopts a C5-type zinc-finger fold. Interaction with DNA stretches follow at residues 198 to 205 (NCLKNAGN) and 237 to 240 (NNSK). The region spanning 256–339 (PCIKAISPGE…KGAPGRFVYT (84 aa)) is the IPT/TIG domain. Disordered regions lie at residues 449–473 (GYARSCGSASPRFAPSPGSQQSSYG) and 556–586 (VLRPPSSPSQACPRAHREGLPDQPFEDTDKF). The span at 464–473 (SPGSQQSSYG) shows a compositional bias: low complexity.

Belongs to the COE family. Forms either a homodimer or a heterodimer with a related family member. In terms of tissue distribution, expressed in the olfactory epithelium, including in both neuronal and basal cell layers. Absent in the vomeronasal organ. Absent from NK cells and CD8(+) T cells.

It localises to the nucleus. Its function is as follows. Transcription factor. Positively modulates transcription, perhaps less strongly than other early B cell factor/EBF family proteins. Binds an EBF1/Olf-1 consensus site in vitro. This Mus musculus (Mouse) protein is Transcription factor COE4 (Ebf4).